A 207-amino-acid chain; its full sequence is Ribonuclease HII (207 aa).

In terms of domain architecture, RNase H type-2 spans 18–207; sequence GLVAGVDEAG…VAEVLREALP (190 aa). Residues aspartate 24, glutamate 25, and aspartate 116 each coordinate a divalent metal cation.

Belongs to the RNase HII family. Requires Mn(2+) as cofactor. Mg(2+) is required as a cofactor.

The protein resides in the cytoplasm. The enzyme catalyses Endonucleolytic cleavage to 5'-phosphomonoester.. Functionally, endonuclease that specifically degrades the RNA of RNA-DNA hybrids. This chain is Ribonuclease HII, found in Albidiferax ferrireducens (strain ATCC BAA-621 / DSM 15236 / T118) (Rhodoferax ferrireducens).